The chain runs to 145 residues: MIALIQRVTQAKVDIAGVTVGAINHGLLVLLGVEKDDNQQKAKRLCEKVCGYRIFSDENDKMNLNVQQAGGSLLVVSQFTLAAETQKGMRPGFSNGAPPEMAENLYHYFVEQCKQQGLETQTGQFAADMQVTLTNDGPVTFWLQV.

Positions 137–138 (GP) match the Gly-cisPro motif, important for rejection of L-amino acids motif.

The protein belongs to the DTD family. Homodimer.

Its subcellular location is the cytoplasm. It catalyses the reaction glycyl-tRNA(Ala) + H2O = tRNA(Ala) + glycine + H(+). It carries out the reaction a D-aminoacyl-tRNA + H2O = a tRNA + a D-alpha-amino acid + H(+). An aminoacyl-tRNA editing enzyme that deacylates mischarged D-aminoacyl-tRNAs. Also deacylates mischarged glycyl-tRNA(Ala), protecting cells against glycine mischarging by AlaRS. Acts via tRNA-based rather than protein-based catalysis; rejects L-amino acids rather than detecting D-amino acids in the active site. By recycling D-aminoacyl-tRNA to D-amino acids and free tRNA molecules, this enzyme counteracts the toxicity associated with the formation of D-aminoacyl-tRNA entities in vivo and helps enforce protein L-homochirality. The chain is D-aminoacyl-tRNA deacylase from Proteus mirabilis (strain HI4320).